Here is a 247-residue protein sequence, read N- to C-terminus: Terpene cyclase ausL (247 aa).

The next 6 membrane-spanning stretches (helical) occupy residues Ala-49–Tyr-69, His-75–Leu-95, Leu-114–Leu-134, Gly-138–Val-158, Ser-171–Ile-191, and Pro-206–Tyr-226.

Belongs to the paxB family.

Its subcellular location is the membrane. It participates in secondary metabolite biosynthesis; terpenoid biosynthesis. In terms of biological role, terpene cyclase; part of the gene cluster that mediates the biosynthesis of calidodehydroaustin, a fungal meroterpenoid. The first step of the pathway is the synthesis of 3,5-dimethylorsellinic acid by the polyketide synthase ausA. 3,5-dimethylorsellinic acid is then prenylated by the polyprenyl transferase ausN. Further epoxidation by the FAD-dependent monooxygenase ausM and cyclization by the probable terpene cyclase ausL lead to the formation of protoaustinoid A. Protoaustinoid A is then oxidized to spiro-lactone preaustinoid A3 by the combined action of the FAD-binding monooxygenases ausB and ausC, and the dioxygenase ausE. Acid-catalyzed keto-rearrangement and ring contraction of the tetraketide portion of preaustinoid A3 by ausJ lead to the formation of preaustinoid A4. The aldo-keto reductase ausK, with the help of ausH, is involved in the next step by transforming preaustinoid A4 into isoaustinone which is in turn hydroxylated by the P450 monooxygenase ausI to form austinolide. The cytochrome P450 monooxygenase ausG modifies austinolide to austinol. Austinol is further acetylated to austin by the O-acetyltransferase ausP, which spontaneously changes to dehydroaustin. The cytochrome P450 monooxygenase ausR then converts dehydroaustin is into 7-dehydrodehydroaustin. The hydroxylation catalyzed by ausR permits the O-acetyltransferase ausQ to add an additional acetyl group to the molecule, leading to the formation of acetoxydehydroaustin. The short chain dehydrogenase ausT catalyzes the reduction of the double bond present between carbon atoms 1 and 2 to convert 7-dehydrodehydroaustin into 1,2-dihydro-7-hydroxydehydroaustin. AusQ catalyzes not only an acetylation reaction but also the addition of the PKS ausV diketide product to 1,2-dihydro-7-hydroxydehydroaustin, forming precalidodehydroaustin. Finally, the iron/alpha-ketoglutarate-dependent dioxygenase converts precalidodehydroaustin into calidodehydroaustin. The polypeptide is Terpene cyclase ausL (Aspergillus calidoustus).